Consider the following 404-residue polypeptide: Cysteine desulfurase IscS (404 aa).

Pyridoxal 5'-phosphate contacts are provided by residues 75–76 (AT), N155, Q183, and 203–205 (SAH). Position 206 is an N6-(pyridoxal phosphate)lysine (K206). Position 243 (T243) interacts with pyridoxal 5'-phosphate. C328 functions as the Cysteine persulfide intermediate in the catalytic mechanism. Position 328 (C328) interacts with [2Fe-2S] cluster.

Belongs to the class-V pyridoxal-phosphate-dependent aminotransferase family. NifS/IscS subfamily. Homodimer. Forms a heterotetramer with IscU, interacts with other sulfur acceptors. The cofactor is pyridoxal 5'-phosphate.

The protein resides in the cytoplasm. It carries out the reaction (sulfur carrier)-H + L-cysteine = (sulfur carrier)-SH + L-alanine. It functions in the pathway cofactor biosynthesis; iron-sulfur cluster biosynthesis. Its function is as follows. Master enzyme that delivers sulfur to a number of partners involved in Fe-S cluster assembly, tRNA modification or cofactor biosynthesis. Catalyzes the removal of elemental sulfur atoms from cysteine to produce alanine. Functions as a sulfur delivery protein for Fe-S cluster synthesis onto IscU, an Fe-S scaffold assembly protein, as well as other S acceptor proteins. This chain is Cysteine desulfurase IscS, found in Vibrio cholerae serotype O1 (strain M66-2).